The primary structure comprises 414 residues: FAD-dependent monooxygenase adaC (414 aa).

Residues E32, A43, R115, D325, and G338 each contribute to the FAD site.

This sequence belongs to the paxM FAD-dependent monooxygenase family. Requires FAD as cofactor.

The catalysed reaction is 3-(2,4-dioxopentyl)-3,6,8,9-tetrahydroxy-1-oxo-1,2,3,4-tetrahydroanthracene-2-carboxyl-[ACP] + NADPH + O2 + H(+) = 3-(2,4-dioxopentyl)-2,3,6,8,9-pentahydroxy-1-oxo-1,2,3,4-tetrahydroanthracene-2-carboxyl-[ACP] + NADP(+) + H2O. It participates in secondary metabolite biosynthesis. Functionally, FAD-dependent monooxygenase; part of the gene cluster that mediates the biosynthesis of the linear tetracyclic TAN-1612 neuropeptide Y receptor antagonist. The decaketide backbone of TAN-1612 is synthesized by the non-reducing polyketide synthase adaA via condensation of one acetyl-CoA starter unit with 9 malonyl-CoA units. The FAD-dependent monooxygenase adaC then performs hydroxylation at C2 while the polaketide chain is still attached to the NRPKS adaA. The alpha-hydroxylation step at C2 appears to be crucial for the following C18-C1 Claisen cyclization and release of the C9-hydroxyl version of TAN-1612 from the NRPKS adaA, two steps performed by the lactamase-like protein adaB. Finally, the O-methyltransferase adaD performs the C9 O-methylation to complete the biosynthesis of TAN-1612. This is FAD-dependent monooxygenase adaC from Aspergillus niger.